A 336-amino-acid chain; its full sequence is MLESDRLISSQSIVSEDAMDRAIRPLSLSEYVGQDSVSSQMQIFINAARKRNDPLDHVLIFGPPGLGKTTLANIIAHEMGVNIRQTSGPVIERAGDIAAILTNLQQNDVLFIDEIHRLSPVIEEILYPAMEDYKLDIMIGEGPAARSIKLELPPFTLIGATTRAGLLTSPLRDRFGIVQRLEYYSVDSLTKIVARSAHLLGVPTKPEGAREIALRSRGTPRIANRLLRRVRDYSEVKGNGIITVDMAQQALEMLEVDQHGFDLMDRKLLLAVIEHFNGGPVGIDSIAAAIGEEKGTIEDVLEPFLIQQGFLMRTPRGRIATSKAYQHFGFSAIEQE.

The tract at residues 4–184 (SDRLISSQSI…FGIVQRLEYY (181 aa)) is large ATPase domain (RuvB-L). ATP is bound by residues Ile23, Arg24, Gly65, Lys68, Thr69, Thr70, 131-133 (EDY), Arg174, Tyr184, and Arg221. Mg(2+) is bound at residue Thr69. The interval 185–255 (SVDSLTKIVA…MAQQALEMLE (71 aa)) is small ATPAse domain (RuvB-S). Residues 258–336 (QHGFDLMDRK…HFGFSAIEQE (79 aa)) are head domain (RuvB-H). Arg313 and Arg318 together coordinate DNA.

The protein belongs to the RuvB family. In terms of assembly, homohexamer. Forms an RuvA(8)-RuvB(12)-Holliday junction (HJ) complex. HJ DNA is sandwiched between 2 RuvA tetramers; dsDNA enters through RuvA and exits via RuvB. An RuvB hexamer assembles on each DNA strand where it exits the tetramer. Each RuvB hexamer is contacted by two RuvA subunits (via domain III) on 2 adjacent RuvB subunits; this complex drives branch migration. In the full resolvosome a probable DNA-RuvA(4)-RuvB(12)-RuvC(2) complex forms which resolves the HJ.

The protein localises to the cytoplasm. The enzyme catalyses ATP + H2O = ADP + phosphate + H(+). Its function is as follows. The RuvA-RuvB-RuvC complex processes Holliday junction (HJ) DNA during genetic recombination and DNA repair, while the RuvA-RuvB complex plays an important role in the rescue of blocked DNA replication forks via replication fork reversal (RFR). RuvA specifically binds to HJ cruciform DNA, conferring on it an open structure. The RuvB hexamer acts as an ATP-dependent pump, pulling dsDNA into and through the RuvAB complex. RuvB forms 2 homohexamers on either side of HJ DNA bound by 1 or 2 RuvA tetramers; 4 subunits per hexamer contact DNA at a time. Coordinated motions by a converter formed by DNA-disengaged RuvB subunits stimulates ATP hydrolysis and nucleotide exchange. Immobilization of the converter enables RuvB to convert the ATP-contained energy into a lever motion, pulling 2 nucleotides of DNA out of the RuvA tetramer per ATP hydrolyzed, thus driving DNA branch migration. The RuvB motors rotate together with the DNA substrate, which together with the progressing nucleotide cycle form the mechanistic basis for DNA recombination by continuous HJ branch migration. Branch migration allows RuvC to scan DNA until it finds its consensus sequence, where it cleaves and resolves cruciform DNA. This Legionella pneumophila (strain Paris) protein is Holliday junction branch migration complex subunit RuvB.